Here is an 86-residue protein sequence, read N- to C-terminus: Palustrin-3b (86 aa).

A signal peptide spans 1–22; the sequence is MFTLKKPLLLIVLLGIISLSLC. A propeptide spanning residues 23 to 36 is cleaved from the precursor; the sequence is EQERNADEDEESEI. Residues Cys81 and Cys86 are joined by a disulfide bond.

In terms of tissue distribution, expressed by the skin glands.

The protein localises to the secreted. In terms of biological role, antimicrobial peptide. The polypeptide is Palustrin-3b (Odorrana versabilis (Chinese bamboo leaf odorous frog)).